Reading from the N-terminus, the 58-residue chain is Large ribosomal subunit protein bL32 (58 aa).

Positions 1–19 (MAVPKKRTSKSKKNMRKAN) are enriched in basic residues. The disordered stretch occupies residues 1-58 (MAVPKKRTSKSKKNMRKANWKNQAKLAAKKALSLGKSVETQRSHSFVHPRYEEEEEED). Over residues 20 to 32 (WKNQAKLAAKKAL) the composition is skewed to low complexity.

It belongs to the bacterial ribosomal protein bL32 family.

The protein is Large ribosomal subunit protein bL32 of Trichodesmium erythraeum (strain IMS101).